The sequence spans 1216 residues: 1-phosphatidylinositol 4,5-bisphosphate phosphodiesterase beta-1 (1216 aa).

Residue Cys17 is the site of S-palmitoyl cysteine attachment. Phosphoserine is present on Ser236. The PI-PLC X-box domain maps to 316-467; the sequence is EDMSQPLSHY…LMYKILVKNK (152 aa). Catalysis depends on residues His331 and His378. Ser417 is subject to Phosphoserine. The tract at residues 469–534 is disordered; that stretch reads KSHKSSEGSG…MDEGTAGSEA (66 aa). Basic and acidic residues predominate over residues 472-483; the sequence is KSSEGSGKKKLS. Low complexity predominate over residues 491–501; the sequence is SDSSSVFEPSS. Residues 507–518 are compositionally biased toward acidic residues; that stretch reads ADTESDDDDDDD. Thr509 is modified (phosphothreonine). 2 positions are modified to phosphoserine: Ser511 and Ser582. The PI-PLC Y-box domain maps to 540-656; the sequence is MSNLVNYIQP…GYRLKPEFMR (117 aa). The C2 domain maps to 656–786; that stretch reads RRPDKHFDPF…RNERNQPLTL (131 aa). Disordered regions lie at residues 834–891, 967–989, 1072–1095, and 1173–1216; these read DEEE…VKAP, EKSA…GSSA, MDKK…EEEK, and ISED…DTPL. Residues 846–868 show a composition bias toward polar residues; it reads ETSSEAPSETRTTPAENGVNHTA. Residue Ser887 is modified to Phosphoserine; by PKC. Over residues 967-979 the composition is skewed to basic and acidic residues; it reads EKSAKKDSKKKSE. Residues Ser978 and Ser987 each carry the phosphoserine modification. Positions 1075–1095 are enriched in basic and acidic residues; that stretch reads KRQEKITEAKSKDKSQMEEEK. Residues Ser1197, Ser1199, and Ser1200 each carry the phosphoserine modification. Residues 1205–1216 are compositionally biased toward basic and acidic residues; the sequence is RENPGREFDTPL.

Interacts with DGKQ. Ca(2+) is required as a cofactor. In terms of processing, palmitoylated. Palmitoylation at Cys-17 by ZDHHC21 regulates the signaling activity of PLCB1 and the function of the endothelial barrier. Palmitoylation by ZDHHC21 is stimulated by inflammation.

It localises to the nucleus membrane. Its subcellular location is the cytoplasm. It carries out the reaction a 1,2-diacyl-sn-glycero-3-phospho-(1D-myo-inositol-4,5-bisphosphate) + H2O = 1D-myo-inositol 1,4,5-trisphosphate + a 1,2-diacyl-sn-glycerol + H(+). The catalysed reaction is a 1,2-diacyl-sn-glycero-3-phospho-(1D-myo-inositol) + H2O = 1D-myo-inositol 1-phosphate + a 1,2-diacyl-sn-glycerol + H(+). In terms of biological role, catalyzes the hydrolysis of 1-phosphatidylinositol 4,5-bisphosphate into diacylglycerol (DAG) and inositol 1,4,5-trisphosphate (IP3) and mediates intracellular signaling downstream of G protein-coupled receptors. Regulates the function of the endothelial barrier. This chain is 1-phosphatidylinositol 4,5-bisphosphate phosphodiesterase beta-1, found in Mus musculus (Mouse).